The following is a 6199-amino-acid chain: Adhesion G-protein coupled receptor V1 (6199 aa).

Residues 1-23 form the signal peptide; sequence MPAVLALSGLLLMLLTVSVRSES. 21 consecutive Calx-beta domains span residues 24-109, 126-230, 249-355, 380-480, 637-737, 753-853, 869-972, 997-1083, 1099-1199, 1434-1534, 1563-1655, 1835-1937, 1963-2063, 2092-2190, 2208-2308, 2425-2525, 2582-2659, 2673-2773, 2814-2908, 2931-3029, and 3054-3154; these read AELR…VFIL, ATIT…VQLT, ISRN…QVVL, DKPY…LKLI, PDIA…ILTL, SREI…VVLS, NITV…ITLL, IYFA…YIVL, TVVI…LRLM, PIPG…FYLQ, GLFS…RVRL, IIVT…VRLT, LFVF…FLEL, QVII…RIEL, ITIL…KVEL, AAFC…FIIK, VREE…QIGL, DTVT…RVIL, PSSL…LVNI, EIII…QLIL, and GHGI…TVTL. The Extracellular portion of the chain corresponds to 24 to 5803; the sequence is AELRFQGQTQ…IESLASFNEA (5780 aa). EAR repeat units follow at residues 3239 to 3284, 3285 to 3333, 3336 to 3372, 3374 to 3420, 3422 to 3467, and 3471 to 3513; these read VLAV…KWQG, VFVP…RVQA, NLTL…VWNR, SFFL…QWTD, RFQN…LWGS, and VFQQ…SWRS. Calx-beta domains lie at 3562-3605, 3619-3719, 3778-3854, 3916-3985, 4000-4103, 4120-4220, 4247-4335, 4371-4471, 4493-4593, 4615-4715, 4993-5076, 5125-5225, and 5260-5360; these read SNQS…RVSL, QVTF…TIVL, ITLS…FVNI, VLRL…MVKL, VVVS…IQLL, VVIR…QLRL, HGLF…FLNI, VIIQ…LQLT, DSPN…IIML, KFGD…TLRL, QHLV…VNLT, SEDS…IYLS, and VGFS…LVEV. The region spanning 5636–5801 is the GAIN-B domain; that stretch reads PYFTIAAHHW…AEIESLASFN (166 aa). 2 disulfide bridges follow: Cys-5751-Cys-5780 and Cys-5768-Cys-5782. The segment at 5751–5801 is GPS; it reads CLLWNQAAESWLSDGQFCRLVDDTQNYVECACSHLSIYTAYAEIESLASFN. The chain crosses the membrane as a helical span at residues 5804 to 5824; it reads FYAAGFICISGFALAMVSHLM. At 5825–5834 the chain is on the cytoplasmic side; sequence CARFLMFAAK. Residues 5835-5855 traverse the membrane as a helical segment; it reads LLTHMMVACLGTQICFLVSAF. At 5856 to 5864 the chain is on the extracellular side; sequence RGRMFSEDS. Residues 5865–5885 form a helical membrane-spanning segment; the sequence is CAALGLFFHYFHLSQFGWMLV. The Cytoplasmic segment spans residues 5886–5908; it reads QAINFWQILVMNDEHTERRYLLY. A helical membrane pass occupies residues 5909–5929; it reads FLLSWGLPALVIIVLVVVLLG. Residues 5930-5954 lie on the Extracellular side of the membrane; sequence GFGWSIHSVYGLVQGDLCFIPNVYA. Residues 5955-5975 traverse the membrane as a helical segment; sequence ALCTAALVPLICLVGVLVIFI. The Cytoplasmic segment spans residues 5976–6001; sequence HAYQVTQQWKAYDDIYRGRTNSSEVP. The helical transmembrane segment at 6002–6022 threads the bilayer; that stretch reads MMLYLFALVTLVCVWAGLHMA. Topologically, residues 6023–6025 are extracellular; sequence YRY. A helical transmembrane segment spans residues 6026-6046; it reads IWMLILLVIFNIFLGLYVFSV. The Cytoplasmic portion of the chain corresponds to 6047–6199; the sequence is YFVMHNQLFW…RRIPIADTHL (153 aa).

This sequence belongs to the G-protein coupled receptor 2 family. Adhesion G-protein coupled receptor (ADGR) subfamily. As to quaternary structure, heterodimer of 2 chains generated by proteolytic processing; the large extracellular N-terminal fragment and the membrane-bound C-terminal fragment predominantly remain associated and non-covalently linked. Post-translationally, autoproteolytically processed at the GPS region of the GAIN-B domain; this cleavage modulates receptor activity.

It localises to the cell membrane. It is found in the cell projection. Its subcellular location is the stereocilium membrane. The protein localises to the photoreceptor inner segment. Receptor that may have an important role in the development of the sensory nervous system. The protein is Adhesion G-protein coupled receptor V1 (adgrv1) of Danio rerio (Zebrafish).